Here is a 1005-residue protein sequence, read N- to C-terminus: MMGDHLRPMECLNICLEDNLQPCPEAYPSEIHGHPGPSEPCQEHTCPFDPPESARPDAPHGNSGVESTHLENCLVQVQARQASASLRSLEDNSSLGSPQQNQSSSTQVVFWAGILQAQMCVLDLEEELEKTEGLRAELRCCIPPPSKDLLGDEGLSPSRPEEDEDSGDDSSGPEEENQTWPREKIPGSSLEWGAEEDSIFFDNPLFLESPCSDTSTEGECFSWGYPNSHPDMKTWHQSPQTLDSPLQKGTGLWRQENELDLGSDTADHGGCSTPPFPVPSYKMHPCLALGSTEGDPTVPPDQEGETSCEDDLGHGSPKAPFVDHELIQESDNFEFDLRPATTHPVQPWGSQTSQSLSDLTQPILEDLQREDPSRSQETLISQNRGERDAGCFQEPVFCTLAPWGSQTSLLEPNCPESEGRGSGPQPSPVSSQDSSPRVLLHSPKWPQDASHLLQKDRSELSSLKEEETEEVPSLRQEAECEDTSRSEDASANQHHVHLASAEGLPESPMPQAQSPEEGWRPSSSREKLANDIRNDKGAWNLALRLYQLNGFRKSEVAAHLRKNNDFSRAVAEAYLSFFQFEGQSLDRALRGFLQALVLSGETQERERILYQFSKRFHYCNPGAFPSVDSVHTLTCAIMLLNTDLHGQNIGKSMSCQEFVTNLNGLQDGRNFPKELLKALYWSIRSEKLEWAIDEEDADRPEKDQPSPSAGKISSPFLQMAQDPTMPTYKQGILARKMHHIADGKKTPWGKRGWKMFHTLLRGMVLYFLKGEGQWLDGESLVGHMVDEPVGVHHSLASPATHYTKKPHVFQLRTADWRLYLFQAPTAKEMASWIARINLAAATHSAPPFPAAVGSQRRFVRPILPMSPVQSSLEEQHRSHENCLDAASDDLLDLQRNLPERRGRSRELEEYRLRKEYLEHEKTRYETYVQLLVARLHFPLGDLALWEDQLGKETDGSQEPRPSLKKSHSSPSLHQEEAPTTAKVKRNISERRTYRKIIPKRNRNQL.

Positions 27–66 (YPSEIHGHPGPSEPCQEHTCPFDPPESARPDAPHGNSGVE) are disordered. 3 positions are modified to phosphoserine: Ser85, Ser88, and Ser97. Disordered regions lie at residues 145-189 (PSKD…PGSS), 287-386 (LALG…NRGE), 407-525 (TSLL…SSSR), and 694-714 (EEDADRPEKDQPSPSAGKISS). The span at 161-177 (EEDEDSGDDSSGPEEEN) shows a compositional bias: acidic residues. The span at 350 to 361 (SQTSQSLSDLTQ) shows a compositional bias: low complexity. Ser381 and Ser435 each carry phosphoserine. The span at 428 to 438 (PVSSQDSSPRV) shows a compositional bias: low complexity. Composition is skewed to basic and acidic residues over residues 453–465 (LQKDRSELSSLKE) and 476–488 (QEAECEDTSRSED). Residues 493–686 (QHHVHLASAE…KALYWSIRSE (194 aa)) enclose the SEC7 domain. Residues 726 to 841 (PTYKQGILAR…WIARINLAAA (116 aa)) enclose the PH domain. Residues 870–926 (SSLEEQHRSHENCLDAASDDLLDLQRNLPERRGRSRELEEYRLRKEYLEHEKTRYET) adopt a coiled-coil conformation. The interval 951 to 1005 (KETDGSQEPRPSLKKSHSSPSLHQEEAPTTAKVKRNISERRTYRKIIPKRNRNQL) is disordered. Ser968 and Ser971 each carry phosphoserine. Positions 992 to 1005 (TYRKIIPKRNRNQL) are enriched in basic residues.

It is found in the cell membrane. It localises to the cell projection. The protein localises to the ruffle membrane. Functionally, guanine nucleotide exchange factor for ARF6 and ARL14/ARF7. Through ARL14 activation, controls the movement of MHC class II-containing vesicles along the actin cytoskeleton in dendritic cells. Involved in membrane recycling. Interacts with several phosphatidylinositol phosphate species, including phosphatidylinositol 3,4-bisphosphate, phosphatidylinositol 3,5-bisphosphate and phosphatidylinositol 4,5-bisphosphate. The sequence is that of PH and SEC7 domain-containing protein 4 (Psd4) from Mus musculus (Mouse).